The sequence spans 549 residues: Hydroxylamine reductase (549 aa).

The [4Fe-4S] cluster site is built by C3, C6, C15, and C21. H244, E268, C313, C405, C433, C458, E492, and K494 together coordinate hybrid [4Fe-2O-2S] cluster. A Cysteine persulfide modification is found at C405.

Belongs to the HCP family. Requires [4Fe-4S] cluster as cofactor. It depends on hybrid [4Fe-2O-2S] cluster as a cofactor.

Its subcellular location is the cytoplasm. The catalysed reaction is A + NH4(+) + H2O = hydroxylamine + AH2 + H(+). Functionally, catalyzes the reduction of hydroxylamine to form NH(3) and H(2)O. The protein is Hydroxylamine reductase of Crocosphaera subtropica (strain ATCC 51142 / BH68) (Cyanothece sp. (strain ATCC 51142)).